The sequence spans 122 residues: Large ribosomal subunit protein uL14c (122 aa).

It belongs to the universal ribosomal protein uL14 family. In terms of assembly, part of the 50S ribosomal subunit.

The protein resides in the plastid. It is found in the chloroplast. In terms of biological role, binds to 23S rRNA. The polypeptide is Large ribosomal subunit protein uL14c (Panax ginseng (Korean ginseng)).